We begin with the raw amino-acid sequence, 331 residues long: MREETVSWSLEDIREIYHTPVFELIHKANAILRSNFLHSELQTCYLISIKTGGCVEDCAYCAQSSRYHTHVTPEPMMKIVDVVERAKRAVELGATRVCLGAAWRNAKDDRYFDRVLAMVKSITDLGAEVCCALGMLSEEQAKKLYDAGLYAYNHNLDSSPEFYETIITTRSYEDRLNTLDVVNKSGISTCCGGIVGMGESEEDRIKLLHVLATRDHIPESVPVNLLWPIDGTPLQDQPPISFWEVLRTIATARVVFPRSMVRLAAGRAFLTVEQQTLCFLAGANSIFYGDKLLTVENNDIDEDAEMIKLLGLIPRPSFGIERGNPCYANNS.

The 226-residue stretch at 39–264 folds into the Radical SAM core domain; sequence SELQTCYLIS…VFPRSMVRLA (226 aa). 3 residues coordinate [4Fe-4S] cluster: Cys54, Cys58, and Cys61. Residues Cys98, Cys130, Cys190, and Arg262 each coordinate [2Fe-2S] cluster.

The protein belongs to the radical SAM superfamily. Biotin synthase family. As to quaternary structure, homodimer. [4Fe-4S] cluster serves as cofactor. [2Fe-2S] cluster is required as a cofactor.

It catalyses the reaction (4R,5S)-dethiobiotin + (sulfur carrier)-SH + 2 reduced [2Fe-2S]-[ferredoxin] + 2 S-adenosyl-L-methionine = (sulfur carrier)-H + biotin + 2 5'-deoxyadenosine + 2 L-methionine + 2 oxidized [2Fe-2S]-[ferredoxin]. It functions in the pathway cofactor biosynthesis; biotin biosynthesis; biotin from 7,8-diaminononanoate: step 2/2. In terms of biological role, catalyzes the conversion of dethiobiotin (DTB) to biotin by the insertion of a sulfur atom into dethiobiotin via a radical-based mechanism. This chain is Biotin synthase, found in Chlamydia pneumoniae (Chlamydophila pneumoniae).